A 364-amino-acid chain; its full sequence is Anthranilate phosphoribosyltransferase (364 aa).

5-phospho-alpha-D-ribose 1-diphosphate contacts are provided by residues G101, 104–105 (GD), T109, 111–114 (NLST), 129–137 (KHGNRAASS), and G141. G101 provides a ligand contact to anthranilate. Residue S113 participates in Mg(2+) binding. N132 provides a ligand contact to anthranilate. R187 provides a ligand contact to anthranilate. Residues D245 and E246 each coordinate Mg(2+).

It belongs to the anthranilate phosphoribosyltransferase family. As to quaternary structure, homodimer. Requires Mg(2+) as cofactor.

It carries out the reaction N-(5-phospho-beta-D-ribosyl)anthranilate + diphosphate = 5-phospho-alpha-D-ribose 1-diphosphate + anthranilate. It participates in amino-acid biosynthesis; L-tryptophan biosynthesis; L-tryptophan from chorismate: step 2/5. Catalyzes the transfer of the phosphoribosyl group of 5-phosphorylribose-1-pyrophosphate (PRPP) to anthranilate to yield N-(5'-phosphoribosyl)-anthranilate (PRA). This is Anthranilate phosphoribosyltransferase from Mycolicibacterium vanbaalenii (strain DSM 7251 / JCM 13017 / BCRC 16820 / KCTC 9966 / NRRL B-24157 / PYR-1) (Mycobacterium vanbaalenii).